We begin with the raw amino-acid sequence, 34 residues long: Dermaseptin-S2 (34 aa).

It belongs to the frog skin active peptide (FSAP) family. Dermaseptin subfamily. In terms of tissue distribution, expressed by the skin glands.

It localises to the secreted. Potent antimicrobial peptide with activity against bacteria and protozoa. Also has activity against fungi. Probably acts by disturbing membrane functions with its amphipathic structure. In Phyllomedusa sauvagei (Sauvage's leaf frog), this protein is Dermaseptin-S2.